The chain runs to 139 residues: FAD synthase (139 aa).

ATP contacts are provided by residues 9–10 (TF), 14–17 (HPGH), and D92.

The protein belongs to the archaeal FAD synthase family. Homodimer. It depends on a divalent metal cation as a cofactor.

It carries out the reaction FMN + ATP + H(+) = FAD + diphosphate. It participates in cofactor biosynthesis; FAD biosynthesis; FAD from FMN: step 1/1. Catalyzes the transfer of the AMP portion of ATP to flavin mononucleotide (FMN) to produce flavin adenine dinucleotide (FAD) coenzyme. The protein is FAD synthase of Methanosarcina barkeri (strain Fusaro / DSM 804).